We begin with the raw amino-acid sequence, 245 residues long: rRNA adenine N-6-methyltransferase (245 aa).

S-adenosyl-L-methionine contacts are provided by N10, L12, G37, E58, D83, and S100.

The protein belongs to the class I-like SAM-binding methyltransferase superfamily. rRNA adenine N(6)-methyltransferase family.

The enzyme catalyses adenosine(2085) in 23S rRNA + 2 S-adenosyl-L-methionine = N(6)-dimethyladenosine(2085) in 23S rRNA + 2 S-adenosyl-L-homocysteine + 2 H(+). Its function is as follows. This protein produces a dimethylation of the adenine residue at position 2085 in 23S rRNA, resulting in reduced affinity between ribosomes and macrolide-lincosamide-streptogramin B antibiotics. The protein is rRNA adenine N-6-methyltransferase (ermBP) of Clostridium perfringens.